We begin with the raw amino-acid sequence, 518 residues long: Probable malate:quinone oxidoreductase (518 aa).

A disordered region spans residues 495–518; that stretch reads GAIPATTDGQSTAGTEHTPTAATV. Residues 501 to 518 show a composition bias toward polar residues; sequence TDGQSTAGTEHTPTAATV.

Belongs to the MQO family. The cofactor is FAD.

The enzyme catalyses (S)-malate + a quinone = a quinol + oxaloacetate. The protein operates within carbohydrate metabolism; tricarboxylic acid cycle; oxaloacetate from (S)-malate (quinone route): step 1/1. The chain is Probable malate:quinone oxidoreductase from Mycolicibacterium gilvum (strain PYR-GCK) (Mycobacterium gilvum (strain PYR-GCK)).